Consider the following 258-residue polypeptide: Indole-3-glycerol phosphate synthase (258 aa).

The protein belongs to the TrpC family.

It catalyses the reaction 1-(2-carboxyphenylamino)-1-deoxy-D-ribulose 5-phosphate + H(+) = (1S,2R)-1-C-(indol-3-yl)glycerol 3-phosphate + CO2 + H2O. The protein operates within amino-acid biosynthesis; L-tryptophan biosynthesis; L-tryptophan from chorismate: step 4/5. The protein is Indole-3-glycerol phosphate synthase of Endomicrobium trichonymphae.